The sequence spans 405 residues: CMP-sialic acid transporter 3 (405 aa).

The Cytoplasmic segment spans residues 1-39; that stretch reads MKNGIAECPACHSKLVSPGSKTISRAYDDHKIRVSSKQR. A helical membrane pass occupies residues 40–60; that stretch reads VLNVLLVVGDCMLVGLQPVLV. At 61 to 73 the chain is on the lumenal side; it reads YMSKVDGKFNFSP. Residues 74–94 traverse the membrane as a helical segment; sequence ISVNFLTEIAKVIFAIVMLLI. Residues 95 to 142 lie on the Cytoplasmic side of the membrane; the sequence is QARHQKVGEKPLLSVSTFVQAARNNVLLAVPALLYAINNYLKFTMQLY. Residues 143 to 163 form a helical membrane-spanning segment; sequence FNPATVKMLSNLKVLVIAVLL. Over 164–170 the chain is Lumenal; it reads KMVMKRR. A helical transmembrane segment spans residues 171–191; that stretch reads FSIIQWEALALLLIGISVNQL. Residues 192 to 199 lie on the Cytoplasmic side of the membrane; the sequence is RSLPEGAT. A helical transmembrane segment spans residues 200–220; the sequence is AIGIPLATGAYVCTVIFVTVP. Topologically, residues 221–243 are lumenal; it reads SMASVFNEYALKSQYDTSIYLQN. The helical transmembrane segment at 244–264 threads the bilayer; sequence LFLYGYGAIFNFLGILGTVIY. The Cytoplasmic segment spans residues 265-280; that stretch reads KGPGSFDILQGHSRAT. A helical transmembrane segment spans residues 281 to 301; it reads MFLILNNAAQGILSSFFFKYA. Topologically, residues 302–321 are lumenal; that stretch reads DTILKKYSSTVATIFTGIAS. A helical membrane pass occupies residues 322–342; sequence AALFGHVITMNFLLGISIVFI. The Cytoplasmic portion of the chain corresponds to 343–405; it reads SMHQFFSPLA…SDDRTPLLPR (63 aa). Residues 385 to 405 form a disordered region; sequence GANEEASHRGESDDRTPLLPR. Positions 389–405 are enriched in basic and acidic residues; that stretch reads EASHRGESDDRTPLLPR.

It belongs to the nucleotide-sugar transporter family. CMP-Sialate:CMP antiporter (TC 2.A.7.12) subfamily.

The protein localises to the golgi apparatus membrane. Functionally, sugar transporter involved in the transport of CMP-sialic acid from the cytoplasm into the Golgi. This is CMP-sialic acid transporter 3 (UTR6) from Arabidopsis thaliana (Mouse-ear cress).